Consider the following 177-residue polypeptide: 3-hydroxydecanoyl-[acyl-carrier-protein] dehydratase (177 aa).

H71 is an active-site residue.

It belongs to the thioester dehydratase family. FabA subfamily. Homodimer.

It is found in the cytoplasm. The catalysed reaction is a (3R)-hydroxyacyl-[ACP] = a (2E)-enoyl-[ACP] + H2O. It catalyses the reaction (3R)-hydroxydecanoyl-[ACP] = (2E)-decenoyl-[ACP] + H2O. It carries out the reaction (2E)-decenoyl-[ACP] = (3Z)-decenoyl-[ACP]. It participates in lipid metabolism; fatty acid biosynthesis. Its function is as follows. Necessary for the introduction of cis unsaturation into fatty acids. Catalyzes the dehydration of (3R)-3-hydroxydecanoyl-ACP to E-(2)-decenoyl-ACP and then its isomerization to Z-(3)-decenoyl-ACP. Can catalyze the dehydratase reaction for beta-hydroxyacyl-ACPs with saturated chain lengths up to 16:0, being most active on intermediate chain length. The chain is 3-hydroxydecanoyl-[acyl-carrier-protein] dehydratase from Wigglesworthia glossinidia brevipalpis.